We begin with the raw amino-acid sequence, 59 residues long: uncharacterized protein (59 aa).

Residues 6–26 (WWLVVFAVFVFLFDTLLMQWI) traverse the membrane as a helical segment.

The protein localises to the membrane. This is an uncharacterized protein from Escherichia coli O157:H7.